Here is a 555-residue protein sequence, read N- to C-terminus: Formate--tetrahydrofolate ligase (555 aa).

Position 65–72 (65–72 (TPAGEGKS)) interacts with ATP.

The protein belongs to the formate--tetrahydrofolate ligase family.

The catalysed reaction is (6S)-5,6,7,8-tetrahydrofolate + formate + ATP = (6R)-10-formyltetrahydrofolate + ADP + phosphate. The protein operates within one-carbon metabolism; tetrahydrofolate interconversion. The chain is Formate--tetrahydrofolate ligase from Staphylococcus aureus (strain NCTC 8325 / PS 47).